Consider the following 65-residue polypeptide: UPF0434 protein IL1511 (65 aa).

The protein belongs to the UPF0434 family.

The sequence is that of UPF0434 protein IL1511 from Idiomarina loihiensis (strain ATCC BAA-735 / DSM 15497 / L2-TR).